Reading from the N-terminus, the 371-residue chain is Alanine dehydrogenase (371 aa).

Substrate contacts are provided by R15 and K74. The Proton donor/acceptor role is filled by H95. Residues S133, 177–178 (QA), D197, S219, 238–239 (VL), 266–269 (IAID), and 298–301 (VANM) each bind NAD(+). Catalysis depends on D269, which acts as the Proton donor/acceptor.

Belongs to the AlaDH/PNT family. As to quaternary structure, homohexamer. Trimer of dimer.

It carries out the reaction L-alanine + NAD(+) + H2O = pyruvate + NH4(+) + NADH + H(+). It functions in the pathway amino-acid degradation; L-alanine degradation via dehydrogenase pathway; NH(3) and pyruvate from L-alanine: step 1/1. Its function is as follows. Catalyzes the reversible reductive amination of pyruvate to L-alanine. May play a role in cell wall synthesis as L-alanine is an important constituent of the peptidoglycan layer. This chain is Alanine dehydrogenase (ald), found in Staphylococcus epidermidis (strain ATCC 35984 / DSM 28319 / BCRC 17069 / CCUG 31568 / BM 3577 / RP62A).